Consider the following 256-residue polypeptide: Na(+)-translocating NADH-quinone reductase subunit C (256 aa).

Residues 12–32 form a helical membrane-spanning segment; it reads LGVVIGLSLVCSIIVSTAAVG. Position 224 is an FMN phosphoryl threonine (threonine 224).

Belongs to the NqrC family. In terms of assembly, composed of six subunits; NqrA, NqrB, NqrC, NqrD, NqrE and NqrF. FMN is required as a cofactor.

It is found in the cell inner membrane. The catalysed reaction is a ubiquinone + n Na(+)(in) + NADH + H(+) = a ubiquinol + n Na(+)(out) + NAD(+). This reaction is tightly coupled to the Na(+) pumping activity and specifically requires Na(+) for activity. Inhibited by korormicin and 2-N-heptyl-4-hydroxyquinoline N-oxide (HQNO). In terms of biological role, NQR complex catalyzes the reduction of ubiquinone-1 to ubiquinol by two successive reactions, coupled with the transport of Na(+) ions from the cytoplasm to the periplasm. NqrA to NqrE are probably involved in the second step, the conversion of ubisemiquinone to ubiquinol. The protein is Na(+)-translocating NADH-quinone reductase subunit C of Vibrio alginolyticus.